Reading from the N-terminus, the 234-residue chain is NAD-dependent protein deacylase (234 aa).

In terms of domain architecture, Deacetylase sirtuin-type spans 1–234; sequence MKNLVILSGA…IEMASQEMLK (234 aa). An NAD(+)-binding site is contributed by 9–28; sequence GAGISAESGIKTFRDAGGLW. Residues tyrosine 53 and arginine 56 each coordinate substrate. Residue 86–89 coordinates NAD(+); that stretch reads QNVD. The active-site Proton acceptor is the histidine 104. NAD(+)-binding positions include 169-171 and methionine 217; that span reads GTS.

It belongs to the sirtuin family. Class III subfamily.

The protein resides in the cytoplasm. The enzyme catalyses N(6)-acetyl-L-lysyl-[protein] + NAD(+) + H2O = 2''-O-acetyl-ADP-D-ribose + nicotinamide + L-lysyl-[protein]. It catalyses the reaction N(6)-succinyl-L-lysyl-[protein] + NAD(+) + H2O = 2''-O-succinyl-ADP-D-ribose + nicotinamide + L-lysyl-[protein]. NAD-dependent lysine deacetylase and desuccinylase that specifically removes acetyl and succinyl groups on target proteins. Modulates the activities of several proteins which are inactive in their acylated form. The polypeptide is NAD-dependent protein deacylase (Helicobacter pylori (strain J99 / ATCC 700824) (Campylobacter pylori J99)).